The following is a 367-amino-acid chain: NADH-quinone oxidoreductase subunit D (367 aa).

This sequence belongs to the complex I 49 kDa subunit family. As to quaternary structure, NDH-1 is composed of 14 different subunits. Subunits NuoB, C, D, E, F, and G constitute the peripheral sector of the complex.

The protein localises to the cell membrane. The enzyme catalyses a quinone + NADH + 5 H(+)(in) = a quinol + NAD(+) + 4 H(+)(out). In terms of biological role, NDH-1 shuttles electrons from NADH, via FMN and iron-sulfur (Fe-S) centers, to quinones in the respiratory chain. The immediate electron acceptor for the enzyme in this species is believed to be a menaquinone. Couples the redox reaction to proton translocation (for every two electrons transferred, four hydrogen ions are translocated across the cytoplasmic membrane), and thus conserves the redox energy in a proton gradient. In Geobacillus kaustophilus (strain HTA426), this protein is NADH-quinone oxidoreductase subunit D.